Here is a 240-residue protein sequence, read N- to C-terminus: Probable xyloglucan-specific endo-beta-1,4-glucanase A (240 aa).

An N-terminal signal peptide occupies residues 1 to 15 (MKFLTPLVLSSLASA).

The protein belongs to the glycosyl hydrolase 12 (cellulase H) family.

The protein resides in the secreted. The enzyme catalyses xyloglucan + H2O = xyloglucan oligosaccharides.. Catalyzes endohydrolysis of 1,4-beta-D-glucosidic linkages in xyloglucan with retention of the beta-configuration of the glycosyl residues. Specific for xyloglucan and does not hydrolyze other cell wall components. In Aspergillus oryzae (strain ATCC 42149 / RIB 40) (Yellow koji mold), this protein is Probable xyloglucan-specific endo-beta-1,4-glucanase A (xgeA).